The primary structure comprises 392 residues: Succinate--CoA ligase [ADP-forming] subunit beta (392 aa).

Residues 9 to 248 (KDILRKFGVA…TNEEDPFEVE (240 aa)) enclose the ATP-grasp domain. ATP contacts are provided by residues K50, 57–59 (GRG), E103, M106, and E111. N203 and D217 together coordinate Mg(2+). Residues N268 and 325–327 (GIV) each bind substrate.

This sequence belongs to the succinate/malate CoA ligase beta subunit family. Heterotetramer of two alpha and two beta subunits. Requires Mg(2+) as cofactor.

The catalysed reaction is succinate + ATP + CoA = succinyl-CoA + ADP + phosphate. It catalyses the reaction GTP + succinate + CoA = succinyl-CoA + GDP + phosphate. The protein operates within carbohydrate metabolism; tricarboxylic acid cycle; succinate from succinyl-CoA (ligase route): step 1/1. Succinyl-CoA synthetase functions in the citric acid cycle (TCA), coupling the hydrolysis of succinyl-CoA to the synthesis of either ATP or GTP and thus represents the only step of substrate-level phosphorylation in the TCA. The beta subunit provides nucleotide specificity of the enzyme and binds the substrate succinate, while the binding sites for coenzyme A and phosphate are found in the alpha subunit. This chain is Succinate--CoA ligase [ADP-forming] subunit beta, found in Pelodictyon phaeoclathratiforme (strain DSM 5477 / BU-1).